A 663-amino-acid chain; its full sequence is Pyoverdine export ATP-binding/permease protein PvdT (663 aa).

Residues 11 to 250 (IELRDIRKRY…PSAGVERHLQ (240 aa)) form the ABC transporter domain. 48-55 (GASGSGKS) provides a ligand contact to ATP. The next 4 helical transmembrane spans lie at 292 to 312 (ALTLLGIIIGVASVVVMLAVG), 545 to 565 (IAAISLLVGGIGVMNIMLMTV), 598 to 618 (VVGGLAGIALALCIGGVLLLG), and 626 to 646 (LSAIVGAFSCALVTGLVFGFM).

Belongs to the ABC transporter superfamily. Macrolide exporter (TC 3.A.1.122) family. Part of the tripartite efflux system PvdRT-OpmQ, which is composed of an inner membrane component with both ATPase and permease domains, PvdT, a periplasmic membrane fusion protein, PvdR, and an outer membrane component, OpmQ.

The protein resides in the cell inner membrane. In terms of biological role, part of the tripartite efflux system PvdRT-OpmQ required for the secretion into the extracellular milieu of the siderophore pyoverdine (PVD), which is involved in iron acquisition. This subunit binds PVD and drives its secretion by hydrolyzing ATP. The system is responsible for export of newly synthesized PVD after the final steps of biosynthesis have taken place in the periplasm. It is also responsible for recycling of PVD after internalization of ferri-PVD into the periplasm by the outer-membrane receptor FpvA and release of iron from PVD, thus making PVD available for new cycles of iron uptake. In addition, can expel unwanted metals complexed with PVD from the periplasm into the extracellular medium. The protein is Pyoverdine export ATP-binding/permease protein PvdT of Pseudomonas aeruginosa (strain ATCC 15692 / DSM 22644 / CIP 104116 / JCM 14847 / LMG 12228 / 1C / PRS 101 / PAO1).